The sequence spans 127 residues: uncharacterized protein (127 aa).

A signal peptide spans Met1–Gly23.

This is an uncharacterized protein from Arabidopsis thaliana (Mouse-ear cress).